Reading from the N-terminus, the 119-residue chain is NADH-quinone oxidoreductase subunit A (119 aa).

The next 3 membrane-spanning stretches (helical) occupy residues 7–27 (YPVL…VSIG), 63–83 (LVAI…PWGV), and 88–108 (IGWP…LGFA).

The protein belongs to the complex I subunit 3 family. As to quaternary structure, NDH-1 is composed of 14 different subunits. Subunits NuoA, H, J, K, L, M, N constitute the membrane sector of the complex.

Its subcellular location is the cell inner membrane. It carries out the reaction a quinone + NADH + 5 H(+)(in) = a quinol + NAD(+) + 4 H(+)(out). Functionally, NDH-1 shuttles electrons from NADH, via FMN and iron-sulfur (Fe-S) centers, to quinones in the respiratory chain. The immediate electron acceptor for the enzyme in this species is believed to be ubiquinone. Couples the redox reaction to proton translocation (for every two electrons transferred, four hydrogen ions are translocated across the cytoplasmic membrane), and thus conserves the redox energy in a proton gradient. This chain is NADH-quinone oxidoreductase subunit A, found in Burkholderia mallei (strain NCTC 10247).